A 1037-amino-acid chain; its full sequence is Caspase recruitment domain-containing protein 6 (1037 aa).

Residue Ala2 is modified to N-acetylalanine. The 92-residue stretch at 3–94 folds into the CARD domain; it reads TESTPSEIIE…QSAAICGLRH (92 aa). At Ser154 the chain carries Phosphoserine. 3 disordered regions span residues 235-270, 669-704, and 887-1037; these read DPEH…TSLS, VSSG…PIQE, and RTSH…GGKH. Positions 242–261 are enriched in acidic residues; the sequence is DGEEDFENSETTEFSGEEPS. Low complexity predominate over residues 690–699; that stretch reads LKSSSKSQAL. Composition is skewed to polar residues over residues 911-928, 938-954, and 963-984; these read ASQQ…SNPA, KSSQ…TVKH, and VPSQ…QTKP. A Phosphoserine modification is found at Ser985. The segment covering 994 to 1012 has biased composition (pro residues); it reads PSQPWPPQSKPSQPRPPQP. Basic residues predominate over residues 1023–1037; the sequence is KAHHSKAGQKRGGKH.

Functionally, may be involved in apoptosis. The protein is Caspase recruitment domain-containing protein 6 (CARD6) of Homo sapiens (Human).